Reading from the N-terminus, the 357-residue chain is MFLERLSPIESKIKILEEKLQDTNLIKNQKEYAKVIKEYNYLEKIKEKKDEYENIISQIDENQKILSEEENLEMKELIKQELTHLNLKKDEIEHTIKILLLHQDENDNKNIIIEIRAGTGGEEAALFAHNLYEMYTKYSEKKKWKTELINFNETELGGFKEVSFEIKGKEVFKKLKHESGVHRVQRVPITESNGRLQTSAATVAVLPEVEETDIEINEKDLRIDVYRSSGAGGQHVNTTDSAVRITHLPTGIVVQCQNERSQHKNKDQAMKILRARLYKFEDLKKQEQRSNDRKQQVGSGDRSERIRTYNFPQNRVTEHRANISLYKLEEIMQGELDLLLDTLALKLQEQALKDNPI.

At Q234 the chain carries N5-methylglutamine. A compositionally biased stretch (basic and acidic residues) spans 284-307 (KKQEQRSNDRKQQVGSGDRSERIR). The disordered stretch occupies residues 284 to 313 (KKQEQRSNDRKQQVGSGDRSERIRTYNFPQ).

This sequence belongs to the prokaryotic/mitochondrial release factor family. Methylated by PrmC. Methylation increases the termination efficiency of RF1.

Its subcellular location is the cytoplasm. Its function is as follows. Peptide chain release factor 1 directs the termination of translation in response to the peptide chain termination codons UAG and UAA. This Borrelia turicatae (strain 91E135) protein is Peptide chain release factor 1.